Reading from the N-terminus, the 151-residue chain is Large ribosomal subunit protein uL13 (151 aa).

The segment at 126–151 (YPGPNHPHQAQKPEELTLNTIPNGDK) is disordered. Polar residues predominate over residues 142–151 (TLNTIPNGDK).

Belongs to the universal ribosomal protein uL13 family. Part of the 50S ribosomal subunit.

Its function is as follows. This protein is one of the early assembly proteins of the 50S ribosomal subunit, although it is not seen to bind rRNA by itself. It is important during the early stages of 50S assembly. The chain is Large ribosomal subunit protein uL13 from Crocosphaera subtropica (strain ATCC 51142 / BH68) (Cyanothece sp. (strain ATCC 51142)).